The sequence spans 2359 residues: Voltage-dependent T-type calcium channel subunit alpha-1H (2359 aa).

The interval 1-63 is disordered; that stretch reads MTEGTLAADE…PGTECGADLG (63 aa). At 1–100 the chain is on the cytoplasmic side; that stretch reads MTEGTLAADE…SWCLRLVCNP (100 aa). The segment covering 24–36 has biased composition (low complexity); that stretch reads APVRASPASPGAP. One copy of the I repeat lies at 87-422; sequence TRPRSWCLRL…LCLVVIATQF (336 aa). The chain crosses the membrane as a helical span at residues 101 to 119; sequence WFEHISMLVIMLNCVTLGM. The Extracellular portion of the chain corresponds to 120–141; it reads FRPCEDVECRSERCSILEAFDD. Aspartate 140 contributes to the Zn(2+) binding site. The helical transmembrane segment at 142–160 threads the bilayer; it reads FIFAFFAVEMVIKMVALGL. At 161–169 the chain is on the cytoplasmic side; the sequence is FGQKCYLGD. Residues 170–184 traverse the membrane as a helical segment; that stretch reads TWNRLDFFIVMAGMM. The Extracellular segment spans residues 185 to 193; it reads EYSLDGHNV. Zn(2+)-binding residues include aspartate 189 and histidine 191. Asparagine 192 carries N-linked (GlcNAc...) asparagine glycosylation. A helical membrane pass occupies residues 194–212; that stretch reads SLSAIRTVRVLRPLRAINR. At 213–232 the chain is on the cytoplasmic side; sequence VPSMRILVTLLLDTLPMLGN. Residues 233–253 traverse the membrane as a helical segment; the sequence is VLLLCFFVFFIFGIVGVQLWA. Topologically, residues 254 to 394 are extracellular; it reads GLLRNRCFLD…YYVMDAHSFY (141 aa). N-linked (GlcNAc...) asparagine glycosylation is present at asparagine 271. A helical transmembrane segment spans residues 395–419; it reads NFIYFILLIIMGSFFMINLCLVVIA. Residues 420-790 lie on the Cytoplasmic side of the membrane; sequence TQFSETKQRE…GKLRRIVDSK (371 aa). Disordered stretches follow at residues 490 to 573, 620 to 656, and 737 to 769; these read VDPS…SESV, GTVN…SPRP, and GDCR…ASQP. Over residues 503–532 the composition is skewed to basic residues; it reads RRPRRAGRRTASVHHLVYHHHHHHHHHYHF. Pro residues predominate over residues 557-566; the sequence is PPSPPSPGHG. Over residues 620-631 the composition is skewed to polar residues; sequence GTVNSKGGTSSR. The II repeat unit spans residues 776 to 1015; the sequence is WASFSGKLRR…LLVAILVEGF (240 aa). A helical membrane pass occupies residues 791–811; the sequence is YFNRGIMAAILVNTLSMGVEY. Topologically, residues 812–824 are extracellular; that stretch reads HEQPEELTNALEI. A helical transmembrane segment spans residues 825–846; sequence SNIVFTSMFALEMLLKLLACGP. Residues 847 to 852 are Cytoplasmic-facing; sequence LGYIRN. Residues 853–871 form a helical membrane-spanning segment; it reads PYNIFDGIVVVISVWEIVG. The Extracellular portion of the chain corresponds to 872-879; the sequence is QANGGLSV. Residues 880-903 form a helical membrane-spanning segment; the sequence is LRTFRLLRVLKLVRFLPALRRQLV. Residues 904–914 lie on the Cytoplasmic side of the membrane; that stretch reads VLMRTMDNVAT. Residues 915–935 form a helical membrane-spanning segment; it reads FCMLLMLFIFIFSILGMHLFG. The Extracellular portion of the chain corresponds to 936–987; the sequence is CKFSLKTDSGDTVPDRKNFDSLLWAIVTVFQILTQEDWNVVLYNGMASTSSW. The helical transmembrane segment at 988-1012 threads the bilayer; sequence AALYFVALMTFGNYVLFNLLVAILV. Residues 1013 to 1301 lie on the Cytoplasmic side of the membrane; sequence EGFQAEGDAT…NRLRVSCQKV (289 aa). The disordered stretch occupies residues 1061–1197; the sequence is GHLEGRGSLP…GASPGPRATP (137 aa). The span at 1117 to 1126 shows a compositional bias: polar residues; the sequence is SLASLRSSPC. The segment covering 1130–1147 has biased composition (low complexity); it reads GPNSAGSSRRSSWNSLGR. The stretch at 1292-1569 is one III repeat; it reads NRLRVSCQKV…MFVGVVVENF (278 aa). Residues 1302 to 1324 form a helical membrane-spanning segment; that stretch reads IAHKMFDHVVLVFIFLNCITIAL. Over 1325 to 1342 the chain is Extracellular; the sequence is ERPDIDPGSTERAFLSVS. A helical membrane pass occupies residues 1343–1363; that stretch reads NYIFTAIFVVEMMVKVVALGL. The Cytoplasmic portion of the chain corresponds to 1364–1373; it reads LWGEHAYLQS. A helical transmembrane segment spans residues 1374-1393; that stretch reads SWNVLDGLLVLVSLVDIIVA. Residues 1394–1407 lie on the Extracellular side of the membrane; it reads MASAGGAKILGVLR. The helical transmembrane segment at 1408-1429 threads the bilayer; that stretch reads VLRLLRTLRPLRVISRAPGLKL. The Cytoplasmic portion of the chain corresponds to 1430-1439; that stretch reads VVETLISSLR. Residues 1440–1463 form a helical membrane-spanning segment; sequence PIGNIVLICCAFFIIFGILGVQLF. Residues 1464-1540 lie on the Extracellular side of the membrane; the sequence is KGKFYYCEGT…DQQPVQNHNP (77 aa). N-linked (GlcNAc...) asparagine glycosylation occurs at asparagine 1477. Residues 1541–1566 traverse the membrane as a helical segment; it reads WMLLYFISFLLIVSFFVLNMFVGVVV. Topologically, residues 1567–1621 are cytoplasmic; that stretch reads ENFHKCRQHQEAEEARRREEKRLRRLERRRRKAQRRPYYADYSHTRRSIHSLCTS. The stretch at 1607–1868 is one IV repeat; it reads DYSHTRRSIH…VVVAVLMKHL (262 aa). A helical transmembrane segment spans residues 1622–1642; that stretch reads HYLDLFITFIICLNVITMSME. Over 1643–1656 the chain is Extracellular; that stretch reads HYNQPKSLDEALKY. A helical membrane pass occupies residues 1657–1678; it reads CNYVFTIVFVFEAALKLVAFGF. Over 1679–1685 the chain is Cytoplasmic; that stretch reads RRFFKDR. A helical membrane pass occupies residues 1686–1704; that stretch reads WNQLDLAIVLLSIMGIALE. Over 1705–1718 the chain is Extracellular; the sequence is EIEMNAALPINPTI. A helical membrane pass occupies residues 1719 to 1742; the sequence is IRIMRVLRIARVLKLLKMATGMRA. The Cytoplasmic segment spans residues 1743–1756; it reads LLDTVVQALPQVGN. A helical transmembrane segment spans residues 1757 to 1777; it reads LGLLFMLLFFIYAALGVELFG. Residues 1778–1840 lie on the Extracellular side of the membrane; the sequence is RLECSEDNPC…KHCLSYLPAL (63 aa). Residues 1841 to 1868 traverse the membrane as a helical segment; it reads SPVYFVTFMLVAQFVLVNVVVAVLMKHL. The Cytoplasmic portion of the chain corresponds to 1869–2359; that stretch reads EESNKEARED…APDDSGDEPV (491 aa). Positions 1891–1911 are enriched in polar residues; sequence QGSTAQPPPTAQESQGTQPDT. 4 disordered regions span residues 1891-1913, 1974-2003, 2016-2258, and 2335-2359; these read QGST…DTPN, SFQV…PRSL, HSES…GERW, and PQTP…DEPV. Residues 2016–2026 show a composition bias toward basic and acidic residues; that stretch reads HSESLEGKVDD. Over residues 2086-2096 the composition is skewed to acidic residues; sequence DEAEAADPADE. Positions 2166–2181 are enriched in basic and acidic residues; the sequence is GESHLESGEVRGRASE.

Belongs to the calcium channel alpha-1 subunit (TC 1.A.1.11) family. CACNA1H subfamily. As to quaternary structure, interacts (via N-terminal cytoplasmic domain) with STAC. In terms of processing, in response to raising of intracellular calcium, the T-type channels are activated by CaM-kinase II. As to expression, expressed in brain.

The protein localises to the cell membrane. The enzyme catalyses Ca(2+)(in) = Ca(2+)(out). Functionally, voltage-sensitive calcium channel that gives rise to T-type calcium currents. T-type calcium channels belong to the 'low-voltage activated (LVA)' group. A particularity of this type of channel is an opening at quite negative potentials, and a voltage-dependent inactivation. T-type channels serve pacemaking functions in both central neurons and cardiac nodal cells and support calcium signaling in secretory cells and vascular smooth muscle. They may also be involved in the modulation of firing patterns of neurons. In the adrenal zona glomerulosa, participates in the signaling pathway leading to aldosterone production in response to either AGT/angiotensin II, or hyperkalemia. This chain is Voltage-dependent T-type calcium channel subunit alpha-1H (Cacna1h), found in Rattus norvegicus (Rat).